The chain runs to 160 residues: Lymphocyte antigen 96 (160 aa).

Positions 1–18 (MLPFLFFSTLFSSIFTEA) are cleaved as a signal peptide. Intrachain disulfides connect Cys25-Cys51, Cys37-Cys148, and Cys95-Cys105. N-linked (GlcNAc...) asparagine glycosylation is present at Asn26. Asn114 carries N-linked (GlcNAc...) asparagine glycosylation. Positions 119–123 (FSFKG) are interaction with lipopolysaccharide.

As to quaternary structure, heterogeneous homomer formed from homodimers; disulfide-linked. Belongs to the lipopolysaccharide (LPS) receptor, a multi-protein complex containing at least CD14, LY96 and TLR4. Binds to the extracellular domains of TLR2 and TLR4. Ligand binding induces interaction with TLR4 and oligomerization of the complex. In terms of processing, N-glycosylated; high-mannose.

The protein resides in the secreted. The protein localises to the extracellular space. In terms of biological role, binds bacterial lipopolysaccharide (LPS). Cooperates with TLR4 in the innate immune response to bacterial lipopolysaccharide (LPS), and with TLR2 in the response to cell wall components from Gram-positive and Gram-negative bacteria. Enhances TLR4-dependent activation of NF-kappa-B. Cells expressing both LY96 and TLR4, but not TLR4 alone, respond to LPS. This is Lymphocyte antigen 96 (LY96) from Homo sapiens (Human).